The chain runs to 101 residues: Protein Tat (101 aa).

Residues 1–24 (MEPVDPRLEPWKHPGSQPKTACTN) form an interaction with human CREBBP region. A transactivation region spans residues 1–48 (MEPVDPRLEPWKHPGSQPKTACTNCYCKKCCFHCQVCFTKKALGISYG). Residues Cys22, Cys25, and Cys27 each coordinate Zn(2+). The interval 22–37 (CTNCYCKKCCFHCQVC) is cysteine-rich. Lys28 bears the N6-acetyllysine; by host PCAF mark. Zn(2+) is bound by residues Cys30, His33, Cys34, and Cys37. Residues 38–48 (FTKKALGISYG) are core. Residues 47-101 (YGRKKRRQRRRAHQDSQNHQASLSKQPSSQTRGDPTGPKEPKKEVEREAETDPLD) form a disordered region. The span at 48-58 (GRKKRRQRRRA) shows a compositional bias: basic residues. Residues 49 to 57 (RKKRRQRRR) carry the Nuclear localization signal, RNA-binding (TAR), and protein transduction motif. Positions 49–86 (RKKRRQRRRAHQDSQNHQASLSKQPSSQTRGDPTGPKE) are interaction with the host capping enzyme RNGTT. N6-acetyllysine; by host EP300 and GCN5L2 occurs at positions 50 and 51. Residues Arg52 and Arg53 each carry the asymmetric dimethylarginine; by host PRMT6 modification. The segment covering 61 to 79 (DSQNHQASLSKQPSSQTRG) has biased composition (polar residues). Lys71 participates in a covalent cross-link: Glycyl lysine isopeptide (Lys-Gly) (interchain with G-Cter in ubiquitin). The Cell attachment site motif lies at 78–80 (RGD). Residues 83–101 (GPKEPKKEVEREAETDPLD) are compositionally biased toward basic and acidic residues.

It belongs to the lentiviruses Tat family. In terms of assembly, interacts with host CCNT1. Associates with the P-TEFb complex composed at least of Tat, P-TEFb (CDK9 and CCNT1), TAR RNA, RNA Pol II. Recruits the HATs CREBBP, TAF1/TFIID, EP300, PCAF and GCN5L2. Interacts with host KAT5/Tip60; this interaction targets the latter to degradation. Interacts with the host deacetylase SIRT1. Interacts with host capping enzyme RNGTT; this interaction stimulates RNGTT. Binds to host KDR, and to the host integrins ITGAV/ITGB3 and ITGA5/ITGB1. Interacts with host KPNB1/importin beta-1 without previous binding to KPNA1/importin alpha-1. Interacts with EIF2AK2. Interacts with host nucleosome assembly protein NAP1L1; this interaction may be required for the transport of Tat within the nucleus, since the two proteins interact at the nuclear rim. Interacts with host C1QBP/SF2P32; this interaction involves lysine-acetylated Tat. Interacts with the host chemokine receptors CCR2, CCR3 and CXCR4. Interacts with host DPP4/CD26; this interaction may trigger an anti-proliferative effect. Interacts with host LDLR. Interacts with the host extracellular matrix metalloproteinase MMP1. Interacts with host PRMT6; this interaction mediates Tat's methylation. Interacts with, and is ubiquitinated by MDM2/Hdm2. Interacts with host PSMC3 and HTATIP2. Interacts with STAB1; this interaction may overcome SATB1-mediated repression of IL2 and IL2RA (interleukin) in T cells by binding to the same domain than HDAC1. Interacts (when acetylated) with human CDK13, thereby increasing HIV-1 mRNA splicing and promoting the production of the doubly spliced HIV-1 protein Nef. Interacts with host TBP; this interaction modulates the activity of transcriptional pre-initiation complex. Interacts with host RELA. Interacts with host PLSCR1; this interaction negatively regulates Tat transactivation activity by altering its subcellular distribution. In terms of processing, asymmetrical arginine methylation by host PRMT6 seems to diminish the transactivation capacity of Tat and affects the interaction with host CCNT1. Post-translationally, acetylation by EP300, CREBBP, GCN5L2/GCN5 and PCAF regulates the transactivation activity of Tat. EP300-mediated acetylation of Lys-50 promotes dissociation of Tat from the TAR RNA through the competitive binding to PCAF's bromodomain. In addition, the non-acetylated Tat's N-terminus can also interact with PCAF. PCAF-mediated acetylation of Lys-28 enhances Tat's binding to CCNT1. Lys-50 is deacetylated by SIRT1. Polyubiquitination by host MDM2 does not target Tat to degradation, but activates its transactivation function and fosters interaction with CCNT1 and TAR RNA. In terms of processing, phosphorylated by EIF2AK2 on serine and threonine residues adjacent to the basic region important for TAR RNA binding and function. Phosphorylation of Tat by EIF2AK2 is dependent on the prior activation of EIF2AK2 by dsRNA.

It is found in the host nucleus. The protein resides in the host nucleolus. Its subcellular location is the host cytoplasm. It localises to the secreted. Its function is as follows. Transcriptional activator that increases RNA Pol II processivity, thereby increasing the level of full-length viral transcripts. Recognizes a hairpin structure at the 5'-LTR of the nascent viral mRNAs referred to as the transactivation responsive RNA element (TAR) and recruits the cyclin T1-CDK9 complex (P-TEFb complex) that will in turn hyperphosphorylate the RNA polymerase II to allow efficient elongation. The CDK9 component of P-TEFb and other Tat-activated kinases hyperphosphorylate the C-terminus of RNA Pol II that becomes stabilized and much more processive. Other factors such as HTATSF1/Tat-SF1, SUPT5H/SPT5, and HTATIP2 are also important for Tat's function. Besides its effect on RNA Pol II processivity, Tat induces chromatin remodeling of proviral genes by recruiting the histone acetyltransferases (HATs) CREBBP, EP300 and PCAF to the chromatin. This also contributes to the increase in proviral transcription rate, especially when the provirus integrates in transcriptionally silent region of the host genome. To ensure maximal activation of the LTR, Tat mediates nuclear translocation of NF-kappa-B by interacting with host RELA. Through its interaction with host TBP, Tat may also modulate transcription initiation. Tat can reactivate a latently infected cell by penetrating in it and transactivating its LTR promoter. In the cytoplasm, Tat is thought to act as a translational activator of HIV-1 mRNAs. Functionally, extracellular circulating Tat can be endocytosed by surrounding uninfected cells via the binding to several surface receptors such as CD26, CXCR4, heparan sulfate proteoglycans (HSPG) or LDLR. Neurons are rarely infected, but they internalize Tat via their LDLR. Through its interaction with nuclear HATs, Tat is potentially able to control the acetylation-dependent cellular gene expression. Modulates the expression of many cellular genes involved in cell survival, proliferation or in coding for cytokines or cytokine receptors. Tat plays a role in T-cell and neurons apoptosis. Tat induced neurotoxicity and apoptosis probably contribute to neuroAIDS. Circulating Tat also acts as a chemokine-like and/or growth factor-like molecule that binds to specific receptors on the surface of the cells, affecting many cellular pathways. In the vascular system, Tat binds to ITGAV/ITGB3 and ITGA5/ITGB1 integrins dimers at the surface of endothelial cells and competes with bFGF for heparin-binding sites, leading to an excess of soluble bFGF. In Homo sapiens (Human), this protein is Protein Tat.